Reading from the N-terminus, the 343-residue chain is Dihydroorotase (343 aa).

Zn(2+) contacts are provided by His13 and His15. Substrate-binding positions include 15–17 (HLR) and Asn41. Positions 99, 136, and 174 each coordinate Zn(2+). At Lys99 the chain carries N6-carboxylysine. Residue His136 participates in substrate binding. Leu219 provides a ligand contact to substrate. Asp247 provides a ligand contact to Zn(2+). Residue Asp247 is part of the active site. Residues His251 and Ala263 each contribute to the substrate site.

It belongs to the metallo-dependent hydrolases superfamily. DHOase family. Class II DHOase subfamily. Homodimer. Zn(2+) serves as cofactor.

It carries out the reaction (S)-dihydroorotate + H2O = N-carbamoyl-L-aspartate + H(+). The protein operates within pyrimidine metabolism; UMP biosynthesis via de novo pathway; (S)-dihydroorotate from bicarbonate: step 3/3. Functionally, catalyzes the reversible cyclization of carbamoyl aspartate to dihydroorotate. The protein is Dihydroorotase of Shewanella oneidensis (strain ATCC 700550 / JCM 31522 / CIP 106686 / LMG 19005 / NCIMB 14063 / MR-1).